The following is a 263-amino-acid chain: Phosphatidylglycerol--prolipoprotein diacylglyceryl transferase (263 aa).

4 consecutive transmembrane segments (helical) span residues 15–35 (ISIH…VYLA), 52–72 (FILL…VIFQ), 83–103 (IFAI…GAAV), and 112–132 (AIAV…AQSI). Arginine 134 serves as a coordination point for a 1,2-diacyl-sn-glycero-3-phospho-(1'-sn-glycerol). 3 consecutive transmembrane segments (helical) span residues 170–190 (VPTF…ILGL), 200–220 (GDVT…IEGM), and 227–247 (FVGL…GAVL).

The protein belongs to the Lgt family.

It localises to the cell membrane. The enzyme catalyses L-cysteinyl-[prolipoprotein] + a 1,2-diacyl-sn-glycero-3-phospho-(1'-sn-glycerol) = an S-1,2-diacyl-sn-glyceryl-L-cysteinyl-[prolipoprotein] + sn-glycerol 1-phosphate + H(+). It participates in protein modification; lipoprotein biosynthesis (diacylglyceryl transfer). In terms of biological role, catalyzes the transfer of the diacylglyceryl group from phosphatidylglycerol to the sulfhydryl group of the N-terminal cysteine of a prolipoprotein, the first step in the formation of mature lipoproteins. The sequence is that of Phosphatidylglycerol--prolipoprotein diacylglyceryl transferase from Streptococcus thermophilus (strain CNRZ 1066).